Here is a 493-residue protein sequence, read N- to C-terminus: 3-octaprenyl-4-hydroxybenzoate carboxy-lyase (493 aa).

A Mn(2+)-binding site is contributed by Asn175. Prenylated FMN contacts are provided by residues 178–180, 192–194, and 197–198; these read IYR, RWL, and RG. Position 241 (Glu241) interacts with Mn(2+). Asp290 (proton donor) is an active-site residue.

It belongs to the UbiD family. In terms of assembly, homohexamer. The cofactor is prenylated FMN. Mn(2+) is required as a cofactor.

It is found in the cell membrane. It catalyses the reaction a 4-hydroxy-3-(all-trans-polyprenyl)benzoate + H(+) = a 2-(all-trans-polyprenyl)phenol + CO2. Its pathway is cofactor biosynthesis; ubiquinone biosynthesis. Catalyzes the decarboxylation of 3-octaprenyl-4-hydroxy benzoate to 2-octaprenylphenol, an intermediate step in ubiquinone biosynthesis. The sequence is that of 3-octaprenyl-4-hydroxybenzoate carboxy-lyase from Photorhabdus laumondii subsp. laumondii (strain DSM 15139 / CIP 105565 / TT01) (Photorhabdus luminescens subsp. laumondii).